A 250-amino-acid polypeptide reads, in one-letter code: Small ribosomal subunit protein uS3 (250 aa).

In terms of domain architecture, KH type-2 spans 39–111 (IRTLIKNNYP…KVQINIFEVK (73 aa)).

The protein belongs to the universal ribosomal protein uS3 family. Part of the 30S ribosomal subunit. Forms a tight complex with proteins S10 and S14.

Binds the lower part of the 30S subunit head. Binds mRNA in the 70S ribosome, positioning it for translation. The sequence is that of Small ribosomal subunit protein uS3 from Alder yellows phytoplasma.